The primary structure comprises 363 residues: tRNA/tmRNA (uracil-C(5))-methyltransferase (363 aa).

The S-adenosyl-L-methionine site is built by Gln-187, Tyr-215, Asn-220, Glu-236, and Asp-296. The active-site Nucleophile is the Cys-321. Catalysis depends on Glu-355, which acts as the Proton acceptor.

It belongs to the class I-like SAM-binding methyltransferase superfamily. RNA M5U methyltransferase family. TrmA subfamily.

The enzyme catalyses uridine(54) in tRNA + S-adenosyl-L-methionine = 5-methyluridine(54) in tRNA + S-adenosyl-L-homocysteine + H(+). It carries out the reaction uridine(341) in tmRNA + S-adenosyl-L-methionine = 5-methyluridine(341) in tmRNA + S-adenosyl-L-homocysteine + H(+). Its function is as follows. Dual-specificity methyltransferase that catalyzes the formation of 5-methyluridine at position 54 (m5U54) in all tRNAs, and that of position 341 (m5U341) in tmRNA (transfer-mRNA). This Pseudomonas aeruginosa (strain LESB58) protein is tRNA/tmRNA (uracil-C(5))-methyltransferase.